The primary structure comprises 679 residues: PHD finger protein PERSISTENT TAPETAL CELL 1 (679 aa).

Residues 620–670 (VVDCACGAVDDDGERMACCDICEAWQHTRCAGIADTEDAPHVFLCSRCDND) form a PHD-type zinc finger.

Functionally, probable transcriptional activator required for tapetal programmed cell death (PCD) and degeneration, and pollen development in anthers. This chain is PHD finger protein PERSISTENT TAPETAL CELL 1, found in Oryza sativa subsp. japonica (Rice).